The primary structure comprises 489 residues: Coronin-1B (489 aa).

At S2 the chain carries Phosphoserine; by PKC. 6 WD repeats span residues 18-72, 73-122, 123-166, 167-210, 211-256, and 257-296; these read QPVK…GRID, KAYP…SPLT, EPVV…GTAE, ELYR…RGTL, VAER…ENLE, and EPMA…RYFE. A disordered region spans residues 408 to 444; sequence RRNVLSDSRPAMAPGSSHLGAPASTTTAADATPSGSL. Low complexity predominate over residues 428–441; sequence APASTTTAADATPS. Positions 449–474 form a coiled coil; the sequence is EAGKLEEVMQELRALRALVKEQGDRI.

This sequence belongs to the WD repeat coronin family. In terms of assembly, forms homooligomers, but does not form complexes with the other coronins. Interacts with Arp2/3 complex components, including ACTR2, ARPC1B and ARPC2. Binds actin. Phosphorylation by PKC on Ser-2 regulates the interaction with the Arp2/3 complex and cell motility in fibroblasts. Phosphorylation does not seem to affect subcellular location.

It is found in the cytoplasm. The protein resides in the cytoskeleton. It localises to the stress fiber. Regulates leading edge dynamics and cell motility in fibroblasts. May be involved in cytokinesis and signal transduction. The polypeptide is Coronin-1B (CORO1B) (Homo sapiens (Human)).